The following is a 2214-amino-acid chain: MATIAPTAPITPPMESTGDRLVTLELKDGTVLQGYSFGAEKSVAGELVFQTGMVGYPESVTDPSYEGQILVITYPLVGNYGVPDMHLRDELVEELPRYFESNRIHIAGLVISHYTDEYSHYLAKSSLGKWLQNEGIPAVYGVDTRSLTKHLRDAGSMLGRLSLEKSGSDRTISRSSSWRSAFDVPEWVDPNVQNLVSKVSINEPKLYVPPADNKHIELQTGPDGKVLRILAIDVGMKYNQIRCFIKRGVELKVVPWNYDFTKEDYDGLFISNGPGDPSVLDDLSQRLSNVLEAKKTPVFGICLGHQLIARAAGASTLKLKFGNRGHNIPCTSTISGRCYITSQNHGFAVDVDTLTSGWKPLFVNANDDSNEGIYHSELPYFSVQFHPESTPGPRDTEFLFDVFIQAVKEFKYTQVLKPIAFPGGLLEDNVKAHPRIEAKKVLVLGSGGLSIGQAGEFDYSGSQAIKALKEEGIYTILINPNIATIQTSKGLADKVYFVPVTAEFVRKVILHERPDAIYVTFGGQTALSVGIAMKDEFEALGVKVLGTPIDTIITTEDRELFSNAIDEINEKCAKSQAANSVDEALAAVKEIGFPVIVRAAYALGGLGSGFANNEKELVDLCNVAFSSSPQVLVEKSMKGWKEVEYEVVRDAFDNCITVCNMENFDPLGIHTGDSIVVAPSQTLSDEDYNMLRTTAVNVIRHLGVVGECNIQYALNPVSKDYCIIEVNARLSRSSALASKATGYPLAYTAAKLGLNIPLNEVKNSVTKSTCACFEPSLDYCVVKMPRWDLKKFTRVSTELSSSMKSVGEVMSIGRTFEEAIQKAIRSTEYANLGFNETDLDIDIDYELNNPTDMRVFAIANAFAKKGYSVDKVWEMTRIDKWFLNKLHDLVQFAEKISSFGTKEELPSLVLRQAKQLGFDDRQIARFLDSNEVAIRRLRKEYGITPFVKQIDTVAAEFPAYTNYLYMTYNADSHDLSFDDHGVMVLGSGVYRIGSSVEFDWCAVTAVRTLRANNIKTIMVNYNPETVSTDYDEADRLYFETINLERVLDIYEIENSSGVVVSMGGQTSNNIAMTLHRENVKILGTSPDMIDSAENRYKFSRMLDQIGVDQPAWKELTSMDEAESFAEKVGYPVLVRPSYVLSGAAMNTVYSKNDLESYLNQAVEVSRDYPVVITKYIENAKEIEMDAVARNGELVMHVVSEHVENAGVHSGDATLIVPPQDLAPETVDRIVVATAKIGKALKITGPYNIQFIAKDNEIKVIECNVRASRSFPFISKVVGVNLIELATKAIMGLPLTPYPVEKLPDDYVAVKVPQFSFPRLAGADPVLGVEMASTGEVATFGHSKYEAYLKSLLATGFKLPKKNILLSIGSYKEKQELLSSVQKLYNMGYKLFATSGTADFLSEHGIAVQYLEVLNKDDDDQKSEYSLTQHLANNEIDLYINLPSANRFRRPASYVSKGYKTRRLAVDYSVPLVTNVKCAKLLIEAISRNITLDVSERDAQTSHRTITLPGLINIATYVPNASHVIKGPAELKETTRLFLESGFTYCQLMPRSISGPVITDVASLKAANSVSQDSSYTDFSFTIAGTAHNAHSVTQSASKVTALFLPLRELKNKITAVAELLNQWPTEKQVIAEAKTADLASVLLLTSLQNRSIHITGVSNKEDLALIMTVKAKDPRVTCDVNIYSLFIAQDDYPEAVFLPTKEDQEFFWNNLDSIDAFSVGALPVALANVTGNKVDVGMGIKDSLPLLLAAVEEGKLTIDDIVLRLHDNPAKIFNIPTQDSVVEIDLDYSFRRNKRWSPFNKDMNGGIERVVYNGETLVLSGELVSPGAKGKCIVNPSPASITASAELQSTSAKRRFSITEEAIADNLDAAEDAIPEQPLEQKLMSSRPPRELVAPGAIQNLIRSNNPFRGRHILSIKQFKRSDFHVLFAVAQELRAAVAREGVLDLMKGHVITTIFFEPSTRTCSSFIAAMERLGGRIVNVNPLVSSVKKGETLQDTIRTLACYSDAIVMRHSEEMSVHIAAKYSPVPIINGGNGSREHPTQAFLDLFTIREEIGTVNGITVTFMGDLKHGRTVHSLCRLLMHYQVRINLVSPPELRLPEGLREELRKAGLLGVESIELTPHIISKTDVLYCTRVQEERFNSPEEYARLKDTYIVDNKILAHAKENMAIMHPLPRVNEIKEEVDYDHRAAYFRQMKYGLFVRMALLAMVMGVDM.

A2 is subject to N-acetylalanine. Positions 2-400 are GATase (Glutamine amidotransferase); that stretch reads ATIAPTAPIT…PGPRDTEFLF (399 aa). Residues S64, G273, and G275 each coordinate L-glutamine. Residues 228–413 enclose the Glutamine amidotransferase type-1 domain; it reads RILAIDVGMK…IQAVKEFKYT (186 aa). Catalysis depends on C302, which acts as the Nucleophile; for GATase activity. Positions 303, 306, 344, 346, and 347 each coordinate L-glutamine. Active-site for GATase activity residues include H386 and E388. The linker stretch occupies residues 401 to 440; that stretch reads DVFIQAVKEFKYTQVLKPIAFPGGLLEDNVKAHPRIEAKK. Positions 440–980 are CPSase A; that stretch reads KVLVLGSGGL…DSHDLSFDDH (541 aa). The interval 440 to 1482 is CPSase (Carbamoyl phosphate synthase); the sequence is KVLVLGSGGL…TNVKCAKLLI (1043 aa). ATP-binding residues include R558, R598, G604, G605, K635, M637, E642, G668, I669, H670, Q711, and E725. ATP-grasp domains are found at residues 562 to 754 and 1099 to 1290; these read SNAI…KLGL and SRML…KAIM. Mg(2+)-binding residues include Q711, E725, and N727. Residues Q711, E725, and N727 each coordinate Mn(2+). Positions 981 to 1482 are CPSase B; it reads GVMVLGSGVY…TNVKCAKLLI (502 aa). R1135, K1174, I1176, E1181, G1206, V1207, H1208, S1209, Q1249, and E1261 together coordinate ATP. Residues Q1249, E1261, and N1263 each coordinate Mg(2+). Mn(2+) contacts are provided by Q1249, E1261, and N1263. The region spanning 1356-1508 is the MGS-like domain; it reads FKLPKKNILL…QTSHRTITLP (153 aa). Residues 1483–1492 are linker; that stretch reads EAISRNITLD. Positions 1493–1821 are defective DHOase domain; the sequence is VSERDAQTSH…YNGETLVLSG (329 aa). A linker region spans residues 1822–1909; that stretch reads ELVSPGAKGK…NLIRSNNPFR (88 aa). Residue K1853 forms a Glycyl lysine isopeptide (Lys-Gly) (interchain with G-Cter in ubiquitin) linkage. S1857 is subject to Phosphoserine; by PKA. An ATCase (Aspartate transcarbamylase) region spans residues 1910–2214; that stretch reads GRHILSIKQF…LLAMVMGVDM (305 aa). Carbamoyl phosphate is bound by residues R1962 and T1963. L-aspartate is bound at residue K1990. Carbamoyl phosphate is bound by residues R2011, H2039, and Q2042. L-aspartate is bound by residues R2072 and R2134. Residues L2173 and P2174 each contribute to the carbamoyl phosphate site.

It in the N-terminal section; belongs to the CarA family. This sequence in the 2nd section; belongs to the CarB family. In the 3rd section; belongs to the metallo-dependent hydrolases superfamily. DHOase family. CAD subfamily. The protein in the C-terminal section; belongs to the aspartate/ornithine carbamoyltransferase superfamily. ATCase family. The cofactor is Mg(2+). It depends on Mn(2+) as a cofactor.

It localises to the cytoplasm. It carries out the reaction hydrogencarbonate + L-glutamine + 2 ATP + H2O = carbamoyl phosphate + L-glutamate + 2 ADP + phosphate + 2 H(+). The catalysed reaction is L-glutamine + H2O = L-glutamate + NH4(+). It catalyses the reaction hydrogencarbonate + NH4(+) + 2 ATP = carbamoyl phosphate + 2 ADP + phosphate + 2 H(+). The enzyme catalyses carbamoyl phosphate + L-aspartate = N-carbamoyl-L-aspartate + phosphate + H(+). It participates in pyrimidine metabolism; UMP biosynthesis via de novo pathway; (S)-dihydroorotate from bicarbonate: step 1/3. Its pathway is pyrimidine metabolism; UMP biosynthesis via de novo pathway; (S)-dihydroorotate from bicarbonate: step 2/3. Both CPSase and ATCase activities are feedback inhibited by the end product UTP. Functionally, multifunctional protein that encodes the first 2 enzymatic activities of the de novo pyrimidine pathway: carbamoylphosphate synthetase (CPSase; EC 6.3.5.5) and aspartate transcarbamylase (ATCase; EC 2.1.3.2). The CPSase-function is accomplished in 2 steps, by a glutamine-dependent amidotransferase activity (GATase) that binds and cleaves glutamine to produce ammonia, followed by an ammonium-dependent carbamoyl phosphate synthetase, which reacts with the ammonia, hydrogencarbonate and ATP to form carbamoyl phosphate. The endogenously produced carbamoyl phosphate is sequestered and channeled to the ATCase active site. ATCase then catalyzes the formation of carbamoyl-L-aspartate from L-aspartate and carbamoyl phosphate. This chain is Multifunctional protein URA2 (URA2), found in Saccharomyces cerevisiae (strain ATCC 204508 / S288c) (Baker's yeast).